We begin with the raw amino-acid sequence, 308 residues long: Oxygen-dependent coproporphyrinogen-III oxidase (308 aa).

Residue S97 coordinates substrate. H101 and H111 together coordinate a divalent metal cation. H111 acts as the Proton donor in catalysis. 113 to 115 (NVR) lines the substrate pocket. 2 residues coordinate a divalent metal cation: H153 and H183. An important for dimerization region spans residues 248-283 (YVEFNLVWDRGTHFGLQSGGRTESILMSMPPLASWS). Substrate is bound at residue 266 to 268 (GGR).

It belongs to the aerobic coproporphyrinogen-III oxidase family. As to quaternary structure, homodimer. The cofactor is a divalent metal cation.

It localises to the cytoplasm. The enzyme catalyses coproporphyrinogen III + O2 + 2 H(+) = protoporphyrinogen IX + 2 CO2 + 2 H2O. Its pathway is porphyrin-containing compound metabolism; protoporphyrin-IX biosynthesis; protoporphyrinogen-IX from coproporphyrinogen-III (O2 route): step 1/1. Involved in the heme biosynthesis. Catalyzes the aerobic oxidative decarboxylation of propionate groups of rings A and B of coproporphyrinogen-III to yield the vinyl groups in protoporphyrinogen-IX. This is Oxygen-dependent coproporphyrinogen-III oxidase from Polaromonas sp. (strain JS666 / ATCC BAA-500).